The primary structure comprises 657 residues: Penicillin-binding protein activator LpoA (657 aa).

A signal peptide spans methionine 1 to alanine 25. Cysteine 26 carries N-palmitoyl cysteine lipidation. The S-diacylglycerol cysteine moiety is linked to residue cysteine 26.

This sequence belongs to the LpoA family. Interacts with PBP1a.

The protein resides in the cell outer membrane. Regulator of peptidoglycan synthesis that is essential for the function of penicillin-binding protein 1A (PBP1a). This is Penicillin-binding protein activator LpoA from Yersinia pseudotuberculosis serotype O:1b (strain IP 31758).